Reading from the N-terminus, the 124-residue chain is Small ribosomal subunit protein bS6 (124 aa).

The interval 96–124 is disordered; that stretch reads ETGPSPMMKEVQREEAKKAAAAQPTEAQA. Over residues 114–124 the composition is skewed to low complexity; the sequence is AAAAQPTEAQA.

This sequence belongs to the bacterial ribosomal protein bS6 family.

Functionally, binds together with bS18 to 16S ribosomal RNA. The polypeptide is Small ribosomal subunit protein bS6 (Burkholderia lata (strain ATCC 17760 / DSM 23089 / LMG 22485 / NCIMB 9086 / R18194 / 383)).